Here is a 936-residue protein sequence, read N- to C-terminus: Coiled-coil domain-containing protein 191 (936 aa).

Coiled-coil stretches lie at residues 189-270 (RLTM…VKAA) and 364-440 (RDYT…LQAA). The interval 495–541 (LGRTTTGNLQGSLQNVSLSAPGNKQHKTLGAEPSQQPGSNETLRTTS) is disordered. Polar residues-rich tracts occupy residues 497–516 (RTTT…SAPG) and 527–541 (PSQQ…RTTS). Positions 554–592 (NRHVFQQQLIEKQKKKLQEQQKTILELKKNLQLAEAQWA) form a coiled coil. Disordered regions lie at residues 607–656 (LSKP…TPHP) and 691–714 (KAQE…RKRE). A coiled-coil region spans residues 662-739 (EERAIQRAEC…IKRNQQLEAI (78 aa)).

This chain is Coiled-coil domain-containing protein 191 (CCDC191), found in Homo sapiens (Human).